The sequence spans 256 residues: Pimeloyl-[acyl-carrier protein] methyl ester esterase (256 aa).

Positions 15–242 (HLVLLHGWGL…AAHAPFISHP (228 aa)) constitute an AB hydrolase-1 domain. Residues W22, 82–83 (SL), and 143–147 (FLALQ) each bind substrate. Residue S82 is the Nucleophile of the active site. Residues D207 and H235 contribute to the active site. H235 is a binding site for substrate.

This sequence belongs to the AB hydrolase superfamily. Carboxylesterase BioH family. Monomer.

The protein resides in the cytoplasm. It catalyses the reaction 6-carboxyhexanoyl-[ACP] methyl ester + H2O = 6-carboxyhexanoyl-[ACP] + methanol + H(+). It participates in cofactor biosynthesis; biotin biosynthesis. The physiological role of BioH is to remove the methyl group introduced by BioC when the pimeloyl moiety is complete. It allows to synthesize pimeloyl-ACP via the fatty acid synthetic pathway through the hydrolysis of the ester bonds of pimeloyl-ACP esters. The protein is Pimeloyl-[acyl-carrier protein] methyl ester esterase of Shigella boydii serotype 4 (strain Sb227).